The following is a 195-amino-acid chain: Phosphoheptose isomerase (195 aa).

The region spanning 35–195 is the SIS domain; the sequence is IVSKILQAGN…IVEYNLFKME (161 aa). Residue 51 to 53 participates in substrate binding; that stretch reads NGG. Positions 60 and 64 each coordinate Zn(2+). Substrate contacts are provided by residues E64, 95–96, 121–123, S126, and Q173; these read ND and STS. Zn(2+) contacts are provided by Q173 and H181.

Belongs to the SIS family. GmhA subfamily. It depends on Zn(2+) as a cofactor.

The protein resides in the cytoplasm. The enzyme catalyses 2 D-sedoheptulose 7-phosphate = D-glycero-alpha-D-manno-heptose 7-phosphate + D-glycero-beta-D-manno-heptose 7-phosphate. It functions in the pathway carbohydrate biosynthesis; D-glycero-D-manno-heptose 7-phosphate biosynthesis; D-glycero-alpha-D-manno-heptose 7-phosphate and D-glycero-beta-D-manno-heptose 7-phosphate from sedoheptulose 7-phosphate: step 1/1. Its function is as follows. Catalyzes the isomerization of sedoheptulose 7-phosphate in D-glycero-D-manno-heptose 7-phosphate. This Leptospira interrogans serogroup Icterohaemorrhagiae serovar copenhageni (strain Fiocruz L1-130) protein is Phosphoheptose isomerase.